The sequence spans 440 residues: Xylose isomerase (440 aa).

Residues His-100 and Asp-103 contribute to the active site. Glu-231, Glu-267, His-270, Asp-295, Asp-306, Asp-308, and Asp-338 together coordinate Mg(2+).

It belongs to the xylose isomerase family. In terms of assembly, homotetramer. Mg(2+) serves as cofactor.

Its subcellular location is the cytoplasm. The catalysed reaction is alpha-D-xylose = alpha-D-xylulofuranose. The polypeptide is Xylose isomerase (Burkholderia cenocepacia (strain HI2424)).